The following is a 256-amino-acid chain: Chitinase 11 (256 aa).

Positions 1–22 (MRRLLPLAGATLLIAAAGGASG) are cleaved as a signal peptide. 2 cysteine pairs are disulfide-bonded: C48–C109 and C214–C247. E91 (proton donor) is an active-site residue.

Belongs to the glycosyl hydrolase 19 family. Chitinase class II subfamily. In terms of tissue distribution, expressed in leaves and at lower levels in roots, sheaths and meristems.

It catalyses the reaction Random endo-hydrolysis of N-acetyl-beta-D-glucosaminide (1-&gt;4)-beta-linkages in chitin and chitodextrins.. In Oryza sativa subsp. japonica (Rice), this protein is Chitinase 11 (Cht11).